The sequence spans 122 residues: MARIAGVNIPTNKRVLIALQYIHGIGQKNAAEILEKVKIADDKRVNQLSDQEVLQIREVIDRDYMVEGDLRRETGMNIKRLMDLGCYRGLRHRRGLPVRGQRTHTNARTRKGPAKSIAGKKK.

The disordered stretch occupies residues Gly-95–Lys-122.

Belongs to the universal ribosomal protein uS13 family. Part of the 30S ribosomal subunit. Forms a loose heterodimer with protein S19. Forms two bridges to the 50S subunit in the 70S ribosome.

Located at the top of the head of the 30S subunit, it contacts several helices of the 16S rRNA. In the 70S ribosome it contacts the 23S rRNA (bridge B1a) and protein L5 of the 50S subunit (bridge B1b), connecting the 2 subunits; these bridges are implicated in subunit movement. Contacts the tRNAs in the A and P-sites. This is Small ribosomal subunit protein uS13 from Rhodopseudomonas palustris (strain BisB18).